The sequence spans 214 residues: uncharacterized protein (214 aa).

This sequence belongs to the uracil-DNA glycosylase (UDG) superfamily.

This is an uncharacterized protein from Haemophilus influenzae (strain ATCC 51907 / DSM 11121 / KW20 / Rd).